Reading from the N-terminus, the 624-residue chain is Aliphatic sulfonate oxidoreductase, WOR-like subunit (624 aa).

Residues Lys-77, Ser-93, Val-94, Ser-96, His-195, Ala-196, Gly-198, and Tyr-199 each contribute to the tungstopterin site. [4Fe-4S] cluster-binding residues include Asp-299, Cys-302, and Cys-306. Residues Asp-353, Leu-357, Asp-358, Gly-359, Thr-470, Asp-490, Ile-494, Cys-495, and Asn-496 each coordinate tungstopterin. A [4Fe-4S] cluster-binding site is contributed by Cys-495. Positions 552–575 (KDDDNPPRFYEPLPSGPVKGKAPN) are disordered.

This sequence belongs to the AOR/FOR family. Heterodimer composed of a small WOR5-S subunit, with four [4Fe-4S] clusters, and a large WOR5-L subunit, containing the active site tungsto-bispyranopterin cofactor as well as another [4Fe-4S] cluster. [4Fe-4S] cluster serves as cofactor. Tungstopterin is required as a cofactor.

Its subcellular location is the cytoplasm. It carries out the reaction an aliphatic sulfonate + 4 oxidized [4Fe-4S]-[ferredoxin] + 2 H2O = 4 reduced [4Fe-4S]-[ferredoxin] + a carboxylate + sulfite + 6 H(+). It catalyses the reaction an aliphatic sulfonate + 2 oxidized [4Fe-4S]-[ferredoxin] + H2O = 2 reduced [4Fe-4S]-[ferredoxin] + an aldehyde + sulfite + 3 H(+). The catalysed reaction is 2 oxidized [4Fe-4S]-[ferredoxin] + an aldehyde + H2O = 2 reduced [4Fe-4S]-[ferredoxin] + a carboxylate + 3 H(+). The enzyme catalyses 4 oxidized [4Fe-4S]-[ferredoxin] + taurine + 2 H2O = 4 reduced [4Fe-4S]-[ferredoxin] + sulfite + glycine + 6 H(+). It carries out the reaction 2 oxidized [4Fe-4S]-[ferredoxin] + taurine + H2O = aminoacetaldehyde + 2 reduced [4Fe-4S]-[ferredoxin] + sulfite + 3 H(+). It catalyses the reaction aminoacetaldehyde + 2 oxidized [4Fe-4S]-[ferredoxin] + H2O = 2 reduced [4Fe-4S]-[ferredoxin] + glycine + 3 H(+). Its function is as follows. WOR-like catalytic subunit of an oxidoreductase that can desulfonate and oxidize aliphatic sulfonates such as taurine. The activity involves two steps: an oxidative desulfonation reaction, followed by the activation of a second water molecule and oxidation of the resulting aldehyde. May be involved in the oxidation of various aliphatic sulfonates and also phosphonates. In vitro, has a broad substrate specificity with a high affinity for several substituted and nonsubstituted aliphatic and aromatic aldehydes with various chain lengths, with methyl viologen or benzyl viologen as electron acceptor. Ferredoxin is the physiological electron acceptor. The polypeptide is Aliphatic sulfonate oxidoreductase, WOR-like subunit (Pyrococcus furiosus (strain ATCC 43587 / DSM 3638 / JCM 8422 / Vc1)).